Here is a 439-residue protein sequence, read N- to C-terminus: Ribosomal protein uS12 methylthiotransferase RimO (439 aa).

The MTTase N-terminal domain maps to 5–115 (PKIGFVSLGC…LIEAVHTHAP (111 aa)). Residues Cys14, Cys50, Cys79, Cys146, Cys150, and Cys153 each coordinate [4Fe-4S] cluster. The 238-residue stretch at 132-369 (LTPRHYSYLK…MGLQAQISTD (238 aa)) folds into the Radical SAM core domain. The 68-residue stretch at 372 to 439 (QRFVGTEQQV…ESTEYDLIAD (68 aa)) folds into the TRAM domain.

This sequence belongs to the methylthiotransferase family. RimO subfamily. It depends on [4Fe-4S] cluster as a cofactor.

Its subcellular location is the cytoplasm. It carries out the reaction L-aspartate(89)-[ribosomal protein uS12]-hydrogen + (sulfur carrier)-SH + AH2 + 2 S-adenosyl-L-methionine = 3-methylsulfanyl-L-aspartate(89)-[ribosomal protein uS12]-hydrogen + (sulfur carrier)-H + 5'-deoxyadenosine + L-methionine + A + S-adenosyl-L-homocysteine + 2 H(+). In terms of biological role, catalyzes the methylthiolation of an aspartic acid residue of ribosomal protein uS12. The chain is Ribosomal protein uS12 methylthiotransferase RimO from Francisella tularensis subsp. novicida (strain U112).